The following is a 216-amino-acid chain: Uracil phosphoribosyltransferase (216 aa).

30–34 (KNLVK) is a binding site for GTP. 5-phospho-alpha-D-ribose 1-diphosphate-binding positions include Arg-80, Arg-105, and 140–148 (DPMIATGST). Uracil-binding positions include Ile-203 and 208–210 (GDA). Asp-209 is a 5-phospho-alpha-D-ribose 1-diphosphate binding site.

Belongs to the UPRTase family. The cofactor is Mg(2+).

It carries out the reaction UMP + diphosphate = 5-phospho-alpha-D-ribose 1-diphosphate + uracil. Its pathway is pyrimidine metabolism; UMP biosynthesis via salvage pathway; UMP from uracil: step 1/1. Allosterically activated by GTP. Catalyzes the conversion of uracil and 5-phospho-alpha-D-ribose 1-diphosphate (PRPP) to UMP and diphosphate. The sequence is that of Uracil phosphoribosyltransferase from Sulfolobus acidocaldarius (strain ATCC 33909 / DSM 639 / JCM 8929 / NBRC 15157 / NCIMB 11770).